The chain runs to 446 residues: Vacuolar cation/proton exchanger 4 (446 aa).

The span at 1–16 shows a compositional bias: low complexity; sequence MSSISTESSSNLSLLE. A disordered region spans residues 1-33; the sequence is MSSISTESSSNLSLLENGGGGSDKPTAETSRRV. Topologically, residues 1-69 are cytoplasmic; the sequence is MSSISTESSS…MRRILTNLQE (69 aa). Residues 70-90 form a helical membrane-spanning segment; that stretch reads VLLGTKLFILFPAVPLAVVAH. Topologically, residues 91–96 are extracellular; sequence RYDCPR. Residues 97–117 form a helical membrane-spanning segment; sequence AWVFALSLLGLTPLAERISFL. Over 118 to 128 the chain is Cytoplasmic; the sequence is TEQIAFHTGPT. The helical transmembrane segment at 129–149 threads the bilayer; it reads VGGLMNATCGNATEMIIAILA. The tract at residues 138-173 is cation selection; it reads GNATEMIIAILAVGQRKMRIVKLSLLGSILSNLLFV. The Extracellular segment spans residues 150-162; the sequence is VGQRKMRIVKLSL. The helical transmembrane segment at 163–183 threads the bilayer; sequence LGSILSNLLFVLGTSLFLGGI. The Cytoplasmic portion of the chain corresponds to 184–196; it reads SNLRKHQSFDPRQ. Residues 197 to 217 traverse the membrane as a helical segment; sequence GDMNSMLLYLALLCQTLPMIM. Over 218-238 the chain is Extracellular; that stretch reads RFTMEAEEYDGSDVVVLSRAS. A helical membrane pass occupies residues 239 to 259; it reads SFVMLIAYLAFLIFHLFSSHL. Residues 260–285 lie on the Cytoplasmic side of the membrane; the sequence is SPPPPPLPQREDVHDDDVSDKEEEGA. Residues 286 to 306 form a helical membrane-spanning segment; it reads VIGMWSAIFWLIIMTLLVALL. The Extracellular portion of the chain corresponds to 307-319; that stretch reads SDYLVSTIQDAAD. A helical membrane pass occupies residues 320–340; it reads SWGLSVGFIGIILLPIVGNAA. The segment at 337–372 is cation selection; that stretch reads GNAAEHAGAVIFAFRNKLDITLGIALGSATQIALFV. The Cytoplasmic portion of the chain corresponds to 341–359; that stretch reads EHAGAVIFAFRNKLDITLG. A helical membrane pass occupies residues 360–380; it reads IALGSATQIALFVVPVTVLVA. Over 381-388 the chain is Extracellular; the sequence is WTMGIEMD. A helical transmembrane segment spans residues 389-409; it reads LNFNLLETACFALSILVTSLV. Residues 410–416 lie on the Cytoplasmic side of the membrane; sequence LQDGTSN. Residues 417 to 437 traverse the membrane as a helical segment; it reads YMKGLVLLLCYVVIAACFFVS. The Extracellular segment spans residues 438–446; that stretch reads NSPSSKLLF.

This sequence belongs to the Ca(2+):cation antiporter (CaCA) (TC 2.A.19) family. Cation/proton exchanger (CAX) subfamily. In terms of tissue distribution, expressed at low levels in all tissues.

The protein localises to the vacuole membrane. Its function is as follows. Vacuolar cation/proton exchanger (CAX). Translocates Ca(2+) and other metal ions into vacuoles using the proton gradient formed by H(+)-ATPase and H(+)-pyrophosphatase. Cation selectivity transport in tobacco root tonoplast vesicles is Cd(2+)&gt;Zn(2+)&gt;&gt;Ca(2+)&gt;&gt;&gt;Mn(2+). This Arabidopsis thaliana (Mouse-ear cress) protein is Vacuolar cation/proton exchanger 4 (CAX4).